Here is a 501-residue protein sequence, read N- to C-terminus: Dipeptide and tripeptide permease A (501 aa).

At 1–34 the chain is on the cytoplasmic side; sequence MSTANNNQPESISMNAFKQPKAFYLIFSIELWER. The helical transmembrane segment at 35–55 threads the bilayer; sequence FGYYGLQGIMAVYLVKMLGMS. The Periplasmic segment spans residues 56–59; it reads EADS. A helical membrane pass occupies residues 60 to 80; sequence ITLFSSFSALVYGFVAIGGWL. The Cytoplasmic segment spans residues 81–89; that stretch reads GDKVLGAKR. The next 2 helical transmembrane spans lie at 90–110 and 111–131; these read VIVLGALTLAVGYSMIAYSGH and EIFWVYLGMATIAVGNGLFKA. At 132-153 the chain is on the periplasmic side; that stretch reads NPSSLLSTCYSKDDPRLDGAFT. The chain crosses the membrane as a helical span at residues 154–174; that stretch reads MYYMSINIGSFFSMLATPWLA. The Cytoplasmic portion of the chain corresponds to 175–178; sequence AKYG. Residues 179–199 traverse the membrane as a helical segment; the sequence is WSVAFSLSVVGMLITLVNFWF. Over 200–220 the chain is Periplasmic; sequence CRKWVKNQGSKPDFLPLQFKK. Residues 221–241 traverse the membrane as a helical segment; it reads LLMVLVGIIALITLSNWLLHN. Residues 242 to 246 are Cytoplasmic-facing; that stretch reads QIIAR. The chain crosses the membrane as a helical span at residues 247–267; it reads WALALVSLGIIFIFTKETLFL. At 268-274 the chain is on the periplasmic side; it reads QGIARRR. Residues 275–295 traverse the membrane as a helical segment; sequence MIVAFLLMLEAVIFFVLYSQM. The Cytoplasmic portion of the chain corresponds to 296 to 320; that stretch reads PTSLNFFAIHNVEHSIFGIGFEPEQ. The chain crosses the membrane as a helical span at residues 321–341; it reads FQALNPFWIMLASPILAAIYN. The Periplasmic segment spans residues 342 to 352; sequence KMGDRLPMPHK. A helical transmembrane segment spans residues 353–373; sequence FAFGMMLCSAAFLVLPWGASF. Topologically, residues 374 to 383 are cytoplasmic; the sequence is ANEHGIVSVN. Residues 384–404 traverse the membrane as a helical segment; that stretch reads WLILSYALQSIGELMISGLGL. Topologically, residues 405 to 414 are periplasmic; it reads AMVAQLVPQR. A helical membrane pass occupies residues 415-435; sequence LMGFIMGSWFLTTAAAALIAG. Residues 436–460 are Cytoplasmic-facing; it reads KVAALTAVPSDAITDAHASLAIYSH. The helical transmembrane segment at 461-481 threads the bilayer; that stretch reads VFMQIGIVTAIIAVLMMLTAP. Residues 482-501 lie on the Periplasmic side of the membrane; the sequence is KLYRMTLAPSDHNDVKIMTQ.

This sequence belongs to the major facilitator superfamily. Proton-dependent oligopeptide transporter (POT/PTR) (TC 2.A.17) family. DtpA subfamily.

The protein resides in the cell inner membrane. In terms of biological role, proton-dependent permease that transports di- and tripeptides. This Yersinia pestis protein is Dipeptide and tripeptide permease A.